We begin with the raw amino-acid sequence, 180 residues long: Cell division protein ZapC (180 aa).

The protein belongs to the ZapC family. As to quaternary structure, interacts directly with FtsZ.

The protein localises to the cytoplasm. Its function is as follows. Contributes to the efficiency of the cell division process by stabilizing the polymeric form of the cell division protein FtsZ. Acts by promoting interactions between FtsZ protofilaments and suppressing the GTPase activity of FtsZ. This Vibrio cholerae serotype O1 (strain ATCC 39315 / El Tor Inaba N16961) protein is Cell division protein ZapC.